Reading from the N-terminus, the 235-residue chain is Ubiquinone/menaquinone biosynthesis C-methyltransferase UbiE (235 aa).

Residues Thr60, Asp80, 106-107 (DV), and Ser123 contribute to the S-adenosyl-L-methionine site.

Belongs to the class I-like SAM-binding methyltransferase superfamily. MenG/UbiE family.

It carries out the reaction a 2-demethylmenaquinol + S-adenosyl-L-methionine = a menaquinol + S-adenosyl-L-homocysteine + H(+). The enzyme catalyses a 2-methoxy-6-(all-trans-polyprenyl)benzene-1,4-diol + S-adenosyl-L-methionine = a 5-methoxy-2-methyl-3-(all-trans-polyprenyl)benzene-1,4-diol + S-adenosyl-L-homocysteine + H(+). The protein operates within quinol/quinone metabolism; menaquinone biosynthesis; menaquinol from 1,4-dihydroxy-2-naphthoate: step 2/2. It functions in the pathway cofactor biosynthesis; ubiquinone biosynthesis. In terms of biological role, methyltransferase required for the conversion of demethylmenaquinol (DMKH2) to menaquinol (MKH2) and the conversion of 2-polyprenyl-6-methoxy-1,4-benzoquinol (DDMQH2) to 2-polyprenyl-3-methyl-6-methoxy-1,4-benzoquinol (DMQH2). This is Ubiquinone/menaquinone biosynthesis C-methyltransferase UbiE from Bdellovibrio bacteriovorus (strain ATCC 15356 / DSM 50701 / NCIMB 9529 / HD100).